The sequence spans 791 residues: Cellobionic acid phosphorylase (791 aa).

Asp-478 acts as the Proton donor in catalysis.

The protein belongs to the glycosyl hydrolase 94 family. Cellobionic acid phosphorylase subfamily. Homodimer.

It catalyses the reaction 4-O-beta-D-glucopyranosyl-D-gluconate + phosphate = D-gluconate + alpha-D-glucose 1-phosphate. It participates in glycan metabolism; cellulose degradation. Functionally, catalyzes the reversible phosphorolysis of cellobionic acid (4-O-beta-D-glucopyranosyl-D-gluconate), a probable step in cellulose degradation. May be part of a metabolic pathway where cellobionic acid is converted into alpha-D-glucose 1-phosphate and D-gluconic acid to enter glycolysis and the pentose phosphate pathway, respectively. Produces 4-O-beta-D-glucopyranosyl-D-glucuronate from alpha-D-glucose 1-phosphate and D-glucuronate with low activity in the synthetic direction. This Neurospora crassa (strain ATCC 24698 / 74-OR23-1A / CBS 708.71 / DSM 1257 / FGSC 987) protein is Cellobionic acid phosphorylase.